The primary structure comprises 128 residues: Large ribosomal subunit protein bL12 (128 aa).

The protein belongs to the bacterial ribosomal protein bL12 family. In terms of assembly, homodimer. Part of the ribosomal stalk of the 50S ribosomal subunit. Forms a multimeric L10(L12)X complex, where L10 forms an elongated spine to which 2 to 4 L12 dimers bind in a sequential fashion. Binds GTP-bound translation factors.

In terms of biological role, forms part of the ribosomal stalk which helps the ribosome interact with GTP-bound translation factors. Is thus essential for accurate translation. The chain is Large ribosomal subunit protein bL12 from Streptomyces antibioticus.